Consider the following 526-residue polypeptide: MHSLQCRRVIPFGKLSLSLHAPRNALRFVHKPAFTFESYKSLHRDPKYAKLSEQDVQVFKSIIGKDGSLIDGLDKSTDPADLDAFNIDWMNKYRGKTQLALKPKTTQQVSEILKYCNQKKLAVVPQGGNTGLVGGSVPVFDEIVLNLGLMNQIHTFDEISGVITLDSGVILENADNFLAEKGYMFPLDLGAKGSCQVGGCAATAAGGLRLLRYGSLHGSILGMEAVLPDGTILDNLVTLRKDNTGLDIKQLFIGSEGYLGVITKLSVICPKRPSSTNVAFFGVPSYENVLKAFSETRSHLTEILSAFELMDNTSQTLVDKYSGTQRPLEDEHPFYVLVETQGSNKEHDEQKITALVEDLLEKEIISDGVLAQDESQLRVLWERREGITECLAKAGSGVYKYDVSLPLPVLYDLVNDTKKRLIEFNLLDDTPEHPVIDVVGFGHMGDGNLHLNIAVRQFDKRVEKCLEPWVYEWVSRHRGSISAEHGLGLLKKPFVGYSKSKEMIHLMKTLKNVFDPNGIMLPYKYV.

The 180-residue stretch at 93–272 folds into the FAD-binding PCMH-type domain; the sequence is YRGKTQLALK…TKLSVICPKR (180 aa).

It belongs to the FAD-binding oxidoreductase/transferase type 4 family. Requires FAD as cofactor.

Its subcellular location is the mitochondrion matrix. It carries out the reaction (R)-lactate + 2 Fe(III)-[cytochrome c] = 2 Fe(II)-[cytochrome c] + pyruvate + 2 H(+). This chain is Putative D-lactate dehydrogenase C713.03, mitochondrial, found in Schizosaccharomyces pombe (strain 972 / ATCC 24843) (Fission yeast).